We begin with the raw amino-acid sequence, 231 residues long: Somatolactin (231 aa).

Residues 1–24 form the signal peptide; it reads MNMMTVKQQGVWAALLWPYLLTAS. Cystine bridges form between Cys29–Cys39, Cys89–Cys205, and Cys222–Cys230. Asn145 carries N-linked (GlcNAc...) asparagine glycosylation.

The protein belongs to the somatotropin/prolactin family. As to expression, pituitary gland.

Its subcellular location is the secreted. The chain is Somatolactin from Paralichthys olivaceus (Bastard halibut).